The following is a 343-amino-acid chain: MYNLARQLLFKLSPETSHDLSLDLIGAGGRLGLNGLLSKSPAKLPVSVMGLEFPNPVGLAAGLDKNGAAIDGFAQLGFGFVEIGTVTPRPQPGNPKPRIFRLPHAEAIINRMGFNNLGVDNLVSRVQAAKYRGILGINIGKNFDTPVERAVDDYLICLDKVYAHASYVTVNVSSPNTPGLRSLQFGDSLKQLLQALSLRQQELTQRHGRRVPLAIKIAPDMSDEETVLVASALIESGMDAVIATNTTLSRQGVEGLPHGDEAGGLSGAPVREKSTHIVKVLAGELAGRLPIIAAGGITEGRHAAEKIAAGASLVQIYSGFIYKGPALIRESVDAIAAMPPAVR.

Residues 61–65 and Thr-85 each bind FMN; that span reads AGLDK. Lys-65 contacts substrate. Residue 110-114 coordinates substrate; the sequence is NRMGF. FMN-binding residues include Asn-138 and Asn-171. Asn-171 provides a ligand contact to substrate. Ser-174 serves as the catalytic Nucleophile. Residue Asn-176 coordinates substrate. Lys-216 and Thr-244 together coordinate FMN. A substrate-binding site is contributed by 245 to 246; sequence NT. Residues Gly-267, Gly-296, and 317 to 318 each bind FMN; that span reads YS.

Belongs to the dihydroorotate dehydrogenase family. Type 2 subfamily. Monomer. Requires FMN as cofactor.

Its subcellular location is the cell membrane. It catalyses the reaction (S)-dihydroorotate + a quinone = orotate + a quinol. The protein operates within pyrimidine metabolism; UMP biosynthesis via de novo pathway; orotate from (S)-dihydroorotate (quinone route): step 1/1. Functionally, catalyzes the conversion of dihydroorotate to orotate with quinone as electron acceptor. The chain is Dihydroorotate dehydrogenase (quinone) from Pseudomonas savastanoi pv. phaseolicola (strain 1448A / Race 6) (Pseudomonas syringae pv. phaseolicola (strain 1448A / Race 6)).